Here is a 447-residue protein sequence, read N- to C-terminus: Cysteine--tRNA ligase (447 aa).

Residue Cys28 participates in Zn(2+) binding. The 'HIGH' region signature appears at 30 to 40 (PTVYNYIHIGN). Residues Cys211, His236, and Glu240 each contribute to the Zn(2+) site. The 'KMSKS' region signature appears at 268–272 (KMSKS). ATP is bound at residue Lys271.

It belongs to the class-I aminoacyl-tRNA synthetase family. As to quaternary structure, monomer. Requires Zn(2+) as cofactor.

It localises to the cytoplasm. The catalysed reaction is tRNA(Cys) + L-cysteine + ATP = L-cysteinyl-tRNA(Cys) + AMP + diphosphate. The protein is Cysteine--tRNA ligase of Streptococcus pyogenes serotype M1.